A 425-amino-acid chain; its full sequence is Enolase (425 aa).

(2R)-2-phosphoglycerate is bound at residue glutamine 161. The active-site Proton donor is glutamate 203. Mg(2+) contacts are provided by aspartate 240, glutamate 283, and aspartate 310. Positions 335, 364, 365, and 386 each coordinate (2R)-2-phosphoglycerate. Lysine 335 (proton acceptor) is an active-site residue.

Belongs to the enolase family. In terms of assembly, component of the RNA degradosome, a multiprotein complex involved in RNA processing and mRNA degradation. Mg(2+) serves as cofactor.

It localises to the cytoplasm. The protein resides in the secreted. Its subcellular location is the cell surface. The catalysed reaction is (2R)-2-phosphoglycerate = phosphoenolpyruvate + H2O. The protein operates within carbohydrate degradation; glycolysis; pyruvate from D-glyceraldehyde 3-phosphate: step 4/5. Functionally, catalyzes the reversible conversion of 2-phosphoglycerate (2-PG) into phosphoenolpyruvate (PEP). It is essential for the degradation of carbohydrates via glycolysis. This chain is Enolase, found in Ruthia magnifica subsp. Calyptogena magnifica.